Here is a 200-residue protein sequence, read N- to C-terminus: Signal peptidase complex catalytic subunit SEC11 (200 aa).

Over 1–15 (MFAELAPYLSNPRQT) the chain is Cytoplasmic. Residues 16–33 (LAQILNFALVLSTAFMGW) form a helical; Signal-anchor for type II membrane protein membrane-spanning segment. At 34–200 (KALSVYTNSS…MGVMVMLQRE (167 aa)) the chain is on the lumenal side. Asn41 carries an N-linked (GlcNAc...) asparagine glycan. Catalysis depends on charge relay system residues Ser53 and His92. Residues 101–131 (GDGGKKSQRRLEKEADKRSGPGLSSPISHQM) are disordered. Over residues 103-119 (GGKKSQRRLEKEADKRS) the composition is skewed to basic and acidic residues. Asp142 serves as the catalytic Charge relay system. The C-terminal short (CTS) helix stretch occupies residues 186–197 (VLLGIMGVMVML).

Belongs to the peptidase S26B family. Component of the signal peptidase complex (SPC) composed of a catalytic subunit SEC11 and three accessory subunits SPC1, SPC2 and SPC3. The complex induces a local thinning of the ER membrane which is used to measure the length of the signal peptide (SP) h-region of protein substrates. This ensures the selectivity of the complex towards h-regions shorter than 18-20 amino acids. SPC associates with the translocon complex.

The protein localises to the endoplasmic reticulum membrane. It carries out the reaction Cleavage of hydrophobic, N-terminal signal or leader sequences from secreted and periplasmic proteins.. Catalytic component of the signal peptidase complex (SPC) which catalyzes the cleavage of N-terminal signal sequences from nascent proteins as they are translocated into the lumen of the endoplasmic reticulum. Specifically cleaves N-terminal signal peptides that contain a hydrophobic alpha-helix (h-region) shorter than 18-20 amino acids. The protein is Signal peptidase complex catalytic subunit SEC11 (SEC11) of Arthroderma gypseum (strain ATCC MYA-4604 / CBS 118893) (Microsporum gypseum).